The following is a 355-amino-acid chain: BAG family molecular chaperone regulator 1 (355 aa).

The disordered stretch occupies residues Met1 to Glu112. A compositionally biased stretch (basic and acidic residues) spans Pro26–Arg39. Composition is skewed to polar residues over residues Ser80–Arg91 and Ser102–Glu111. Repeat copies occupy residues Lys103–Thr108, Glu111–Ile116, Glu117–Thr122, Glu123–Ala128, Glu129–Thr134, Glu141–Thr146, and Glu147–Pro152. A 7 X 6 AA tandem repeat of E-E-X(4) region spans residues Glu111–Glu209. The segment at Thr132–Thr151 is disordered. A Ubiquitin-like domain is found at Leu154 to Pro234. The interaction with HSPA8 stretch occupies residues Asp182–Gly229. The tract at residues Met226–Glu355 is interaction with PPP1R15A. Residues His256 to Glu336 form the BAG domain.

Homodimer. Forms a heteromeric complex with HSP70/HSC70. Binds to the ATPase domain of HSP/HSC70 chaperones. Interacts with NR3C1. Interacts with the N-terminal region of MAPRE2. Interacts with PPP1R15A. Interacts with BCL2 in an ATP-dependent manner. Interacts with SIAH1, HSPA8 (via NBD), HSPA1A (via NBD) and HSPA1B (via NBD). Interacts with SIAH2. Interacts with ESR1; the interaction is promoted in the absence of estradiol (17-beta-estradiol/E2). In terms of processing, ubiquitinated; mediated by SIAH1 or SIAH2 and leading to its subsequent proteasomal degradation. As to expression, isoform 2 is expressed in the heart, lung, kidney and spinal cord. Isoform 1 and isoform 2 are expressed in hematopoietic cell lines. The levels of isoform 2 are relatively constant in all the cell lines examined while the levels of isoform 1 are more variable (at protein level). Isoform 1 is expressed in the lung and kidney. Isoform 2 is expressed in various tissues, with highest levels in testis and stomach.

It localises to the nucleus. The protein resides in the cytoplasm. Functionally, co-chaperone for HSP70 and HSC70 chaperone proteins. Acts as a nucleotide-exchange factor (NEF) promoting the release of ADP from the HSP70 and HSC70 proteins thereby triggering client/substrate protein release. Nucleotide release is mediated via its binding to the nucleotide-binding domain (NBD) of HSPA8/HSC70 where as the substrate release is mediated via its binding to the substrate-binding domain (SBD) of HSPA8/HSC70. Inhibits the pro-apoptotic function of PPP1R15A, and has anti-apoptotic activity. Markedly increases the anti-cell death function of BCL2 induced by various stimuli. Involved in the STUB1-mediated proteasomal degradation of ESR1 in response to age-related circulating estradiol (17-beta-estradiol/E2) decline, thereby promotes neuronal apoptosis in response to ischemic reperfusion injury. The chain is BAG family molecular chaperone regulator 1 (Bag1) from Mus musculus (Mouse).